The sequence spans 79 residues: Defensin-like protein 3 (79 aa).

The signal sequence occupies residues 1 to 29; that stretch reads MAKFASIITLLFAALVVFAAFEAPTMVEA. Disulfide bonds link C32–C79, C43–C64, C49–C73, and C53–C75.

Belongs to the DEFL family.

The protein resides in the secreted. Functionally, possesses antifungal activity sensitive to inorganic cations. The polypeptide is Defensin-like protein 3 (AFP3) (Brassica napus (Rape)).